The sequence spans 105 residues: Large ribosomal subunit protein uL24 (105 aa).

Belongs to the universal ribosomal protein uL24 family. Part of the 50S ribosomal subunit.

In terms of biological role, one of two assembly initiator proteins, it binds directly to the 5'-end of the 23S rRNA, where it nucleates assembly of the 50S subunit. Functionally, one of the proteins that surrounds the polypeptide exit tunnel on the outside of the subunit. The protein is Large ribosomal subunit protein uL24 of Aeromonas hydrophila subsp. hydrophila (strain ATCC 7966 / DSM 30187 / BCRC 13018 / CCUG 14551 / JCM 1027 / KCTC 2358 / NCIMB 9240 / NCTC 8049).